Here is a 671-residue protein sequence, read N- to C-terminus: DNA ligase (671 aa).

NAD(+) contacts are provided by residues 32–36, 81–82, and E113; these read DAEYD and SL. K115 (N6-AMP-lysine intermediate) is an active-site residue. NAD(+) is bound by residues R136, E173, K290, and K314. Zn(2+) is bound by residues C408, C411, C426, and C432. The region spanning 593–671 is the BRCT domain; it reads EIDSPFAGKT…EAEMLRLLGS (79 aa).

The protein belongs to the NAD-dependent DNA ligase family. LigA subfamily. Mg(2+) is required as a cofactor. The cofactor is Mn(2+).

It carries out the reaction NAD(+) + (deoxyribonucleotide)n-3'-hydroxyl + 5'-phospho-(deoxyribonucleotide)m = (deoxyribonucleotide)n+m + AMP + beta-nicotinamide D-nucleotide.. Its function is as follows. DNA ligase that catalyzes the formation of phosphodiester linkages between 5'-phosphoryl and 3'-hydroxyl groups in double-stranded DNA using NAD as a coenzyme and as the energy source for the reaction. It is essential for DNA replication and repair of damaged DNA. The polypeptide is DNA ligase (Shigella flexneri serotype 5b (strain 8401)).